We begin with the raw amino-acid sequence, 139 residues long: Stress-related protein 1 (139 aa).

Positions 1 to 12 (MTSESSTPTGST) are enriched in polar residues. Positions 1-86 (MTSESSTPTG…AERPGSATTP (86 aa)) are disordered. Composition is skewed to low complexity over residues 14 to 53 (ALPA…SLVV) and 60 to 74 (SPVV…TRPR). Serine 60 carries the post-translational modification Phosphoserine.

In terms of tissue distribution, embryo.

Its function is as follows. Involved in drought, heat, cold, and/or salt tolerance. The chain is Stress-related protein 1 (SRP1) from Zea mays (Maize).